Consider the following 208-residue polypeptide: Uracil phosphoribosyltransferase (208 aa).

5-phospho-alpha-D-ribose 1-diphosphate contacts are provided by residues Arg-78, Arg-103, and 130–138 (DPMLATGGS). Uracil contacts are provided by residues Ile-193 and 198-200 (GDA). 5-phospho-alpha-D-ribose 1-diphosphate is bound at residue Asp-199.

The protein belongs to the UPRTase family. Requires Mg(2+) as cofactor.

The enzyme catalyses UMP + diphosphate = 5-phospho-alpha-D-ribose 1-diphosphate + uracil. It participates in pyrimidine metabolism; UMP biosynthesis via salvage pathway; UMP from uracil: step 1/1. Allosterically activated by GTP. Functionally, catalyzes the conversion of uracil and 5-phospho-alpha-D-ribose 1-diphosphate (PRPP) to UMP and diphosphate. The polypeptide is Uracil phosphoribosyltransferase (Histophilus somni (strain 129Pt) (Haemophilus somnus)).